A 339-amino-acid chain; its full sequence is Transcription factor IIIA (339 aa).

9 consecutive C2H2-type zinc fingers follow at residues F12 to H36, F42 to H66, C72 to H97, Y104 to H128, F134 to H158, Y161 to H187, V190 to H212, Y219 to H244, and F250 to H274. Positions F271–K339 are disordered. Residues K299–P309 show a composition bias toward basic residues. Residues Q311–D323 are compositionally biased toward polar residues.

It localises to the nucleus. Its function is as follows. Involved in ribosomal large subunit biogenesis. Interacts with the internal control region (ICR) of approximately 50 bases within the 5S RNA genes, is required for correct transcription of these genes by RNA polymerase III. Also binds the transcribed 5S RNA's. The sequence is that of Transcription factor IIIA (gtf3a) from Anaxyrus americanus (American toad).